A 381-amino-acid polypeptide reads, in one-letter code: E3 ubiquitin-protein ligase RNF13 (381 aa).

An N-terminal signal peptide occupies residues 1–34; that stretch reads MLLSIGMLMLSATQVYTILTVQLFAFLNLLPVEA. Residues 35–182 lie on the Lumenal side of the membrane; sequence DILAYNFENA…VPELSLPLEY (148 aa). The PA domain maps to 64–160; that stretch reads LKGFLINSKP…GESSANSLKD (97 aa). A glycan (N-linked (GlcNAc...) asparagine) is linked at N88. A helical membrane pass occupies residues 183-203; it reads YLIPFLIIVGICLILIVIFMI. The Cytoplasmic segment spans residues 204–381; it reads TKFVQDRHRN…EQDYNIANTV (178 aa). The RING-type; atypical zinc-finger motif lies at 240-282; it reads CAICLEEYEDGDKLRILPCSHAYHCKCVDPWLTKTKKTCPVCK. Positions 285–381 are disordered; the sequence is VVPSQGDSDS…EQDYNIANTV (97 aa). The segment covering 317–328 has biased composition (polar residues); the sequence is SARTQSFGSLSE. Residues 339–357 show a composition bias toward acidic residues; it reads SDYEDDDNEETDSSDADNE. Polar residues predominate over residues 365-381; sequence VQLQPNGEQDYNIANTV.

As to quaternary structure, interacts with ERN1. Autoubiquitinated. In terms of processing, N-glycosylated and also modified with chondroitin sulfate. As to expression, expressed in the brain, heart, kidney, liver and spleen. Higher expression in adult tissues compared to the embryonic counterparts.

It localises to the endoplasmic reticulum membrane. The protein localises to the late endosome membrane. The protein resides in the lysosome membrane. Its subcellular location is the nucleus inner membrane. The enzyme catalyses S-ubiquitinyl-[E2 ubiquitin-conjugating enzyme]-L-cysteine + [acceptor protein]-L-lysine = [E2 ubiquitin-conjugating enzyme]-L-cysteine + N(6)-ubiquitinyl-[acceptor protein]-L-lysine.. The protein operates within protein modification; protein ubiquitination. E3 ubiquitin-protein ligase that regulates cell proliferation. Involved in apoptosis regulation. Mediates ER stress-induced activation of JNK signaling pathway and apoptosis by promoting ERN1 activation and splicing of XBP1 mRNA. Also involved in protein trafficking and localization. The sequence is that of E3 ubiquitin-protein ligase RNF13 (Rnf13) from Mus musculus (Mouse).